A 572-amino-acid polypeptide reads, in one-letter code: Methionine--tRNA ligase (572 aa).

The 'HIGH' region motif lies at Pro-11–Asn-21. Zn(2+) is bound by residues Cys-143, Cys-146, Cys-156, and Cys-159. Residues Gln-346 to Ser-350 carry the 'KMSKS' region motif. Thr-349 provides a ligand contact to ATP.

It belongs to the class-I aminoacyl-tRNA synthetase family. MetG type 1 subfamily. Monomer. It depends on Zn(2+) as a cofactor.

The protein localises to the cytoplasm. The enzyme catalyses tRNA(Met) + L-methionine + ATP = L-methionyl-tRNA(Met) + AMP + diphosphate. In terms of biological role, is required not only for elongation of protein synthesis but also for the initiation of all mRNA translation through initiator tRNA(fMet) aminoacylation. The sequence is that of Methionine--tRNA ligase from Paracoccus denitrificans (strain Pd 1222).